We begin with the raw amino-acid sequence, 728 residues long: Sodium-dependent transporter snf-5 (728 aa).

Topologically, residues 1–84 (MADSGSNEEA…PEEEEEKRDG (84 aa)) are cytoplasmic. The interval 1-84 (MADSGSNEEA…PEEEEEKRDG (84 aa)) is disordered. Composition is skewed to low complexity over residues 29-50 (QQVS…STQS) and 60-73 (KNTT…TLDT). The helical transmembrane segment at 85-105 (FGNSFEFVLTSLGLAVGLGNI) threads the bilayer. The Na(+) site is built by G97, A99, V100, and N104. Topologically, residues 106-119 (WRFPTRAYNNGGSA) are extracellular. Residues 120–140 (FLIPYLTCAFLFGLPAVYFEF) form a helical membrane-spanning segment. Residues 141–162 (LTGQYQGKSPPVIFRRVRPILE) lie on the Cytoplasmic side of the membrane. A helical membrane pass occupies residues 163-183 (GVGWMGVFVAALVAIYYIVIV). Topologically, residues 184–285 (SWISIYMINI…PSSGMLDFGG (102 aa)) are extracellular. Cysteines 204 and 214 form a disulfide. N210, N225, N232, N237, and N257 each carry an N-linked (GlcNAc...) asparagine glycan. Residues 286–306 (FNWPVFAAMSVCWLLTGLGIL) form a helical membrane-spanning segment. The Cytoplasmic portion of the chain corresponds to 307-314 (KGAKIMGK). Residues 315 to 335 (ISYVSVLVPYVLVVVLFINGV) traverse the membrane as a helical segment. Over 336–364 (FQDGSGVGLEMYFGTPNYTKLYEQDTWTE) the chain is Extracellular. Residue N352 is glycosylated (N-linked (GlcNAc...) asparagine). Residues 365-386 (ALKQLCFSLSVGHGGLISLSSY) form a helical membrane-spanning segment. Residue S372 participates in Na(+) binding. The Cytoplasmic segment spans residues 387 to 396 (SPKRNNIFRD). Residues 397–417 (ALIVIIGDTTMSLVGGGAVFA) traverse the membrane as a helical segment. At 418–451 (TLGYLAKATGQDVKDVVKSGLSLAFVVYPEAMTR) the chain is on the extracellular side. A helical membrane pass occupies residues 452 to 472 (MPVPWLWCFIFFLMLFLLGAS). A Na(+)-binding site is contributed by L469. The Cytoplasmic segment spans residues 473–495 (TEIALVDVFCSCIYDQYPRFRNR). Residues 496–516 (KWIVVIAWCSVLYCIGLVFST) form a helical membrane-spanning segment. Residues 517–531 (RAGYYWFEMFDEYAA) lie on the Extracellular side of the membrane. A helical transmembrane segment spans residues 532 to 552 (GFSSVCTVVCELLVMMYIYGF). Residues 553-578 (RNVRDDITEVVGHARNKFTGAIGAHS) lie on the Cytoplasmic side of the membrane. Residues 579–599 (WYFTANWMVISPSIALILVGL) form a helical membrane-spanning segment. The Extracellular segment spans residues 600–616 (SFVREYPYMGRHDIYPA). The chain crosses the membrane as a helical span at residues 617–637 (VFDIFGWFLSFLPVIIVPIFM). Residues 638–728 (LLNFIRCRNR…DTSSTYHQVY (91 aa)) are Cytoplasmic-facing. Acidic residues predominate over residues 687–699 (PWDEENVDLTDSE). The segment at 687–728 (PWDEENVDLTDSESESRNAASGDVPIDDVATIDTSSTYHQVY) is disordered. Polar residues predominate over residues 718 to 728 (IDTSSTYHQVY).

It belongs to the sodium:neurotransmitter symporter (SNF) (TC 2.A.22) family. Expressed in the INT-9 cells and posterior cells of the alimentary canal of the intestine, gut epithelial cells, the pharynx of some worms, two cells of the rectal gland, and in DVA, DVB and DVC neurons and amphid sensory neurons ASI, ADF and ASK neurons.

It is found in the cell membrane. Sodium-dependent amino acid transporter that mediates the uptake of the L-enantiomers of various amino acids, including L-proline and L-methionine, and also of acidic amino acids such as L-glutamic acid and L-aspartic acid. May additionally have a role in potassium-dependent amino acid absorption. In response to the availability of amino acid nutrients, may play a role in dauer formation. May play a role in promoting fertility. The protein is Sodium-dependent transporter snf-5 of Caenorhabditis elegans.